Consider the following 226-residue polypeptide: MLRVPPVIVNFKAYSEAVGENALRLARVAAEVSEETGVEVGICPPHVDLRDVVREVGDEVTVLAQAVDAAEPGGRTGHVTPEMVVEAGADGTLLNHSERRMLLEDLKDVCRACINEGLLTIVCASDALAARAAGALSPHAVAVEPPELIGTGTPVSKADPEVVERSVEVVKEVSEETAVLCGAGITDGSDVRAAVELGADGVLVASGVVLADDPKEALLDLISGLE.

10 to 12 (NFK) is a substrate binding site. His96 acts as the Electrophile in catalysis. Glu144 acts as the Proton acceptor in catalysis. Substrate is bound by residues Ile149, Gly184, and 205 to 206 (AS).

Belongs to the triosephosphate isomerase family. Homotetramer; dimer of dimers.

It localises to the cytoplasm. It catalyses the reaction D-glyceraldehyde 3-phosphate = dihydroxyacetone phosphate. The protein operates within carbohydrate biosynthesis; gluconeogenesis. It functions in the pathway carbohydrate degradation; glycolysis; D-glyceraldehyde 3-phosphate from glycerone phosphate: step 1/1. Involved in the gluconeogenesis. Catalyzes stereospecifically the conversion of dihydroxyacetone phosphate (DHAP) to D-glyceraldehyde-3-phosphate (G3P). The sequence is that of Triosephosphate isomerase from Methanopyrus kandleri (strain AV19 / DSM 6324 / JCM 9639 / NBRC 100938).